Here is a 338-residue protein sequence, read N- to C-terminus: DNA-directed RNA polymerase subunit alpha (338 aa).

The alpha N-terminal domain (alpha-NTD) stretch occupies residues M1 to E234. Residues F250–Y338 are alpha C-terminal domain (alpha-CTD).

Belongs to the RNA polymerase alpha chain family. Homodimer. The RNAP catalytic core consists of 2 alpha, 1 beta, 1 beta' and 1 omega subunit. When a sigma factor is associated with the core the holoenzyme is formed, which can initiate transcription.

The catalysed reaction is RNA(n) + a ribonucleoside 5'-triphosphate = RNA(n+1) + diphosphate. Functionally, DNA-dependent RNA polymerase catalyzes the transcription of DNA into RNA using the four ribonucleoside triphosphates as substrates. The polypeptide is DNA-directed RNA polymerase subunit alpha (Methylocella silvestris (strain DSM 15510 / CIP 108128 / LMG 27833 / NCIMB 13906 / BL2)).